Here is a 348-residue protein sequence, read N- to C-terminus: Arginine kinase Oct f 2 (348 aa).

A Phosphagen kinase N-terminal domain is found at 1 to 83 (MAEELFKTLQ…LDAVIMDYHK (83 aa)). 56 to 60 (GVGIY) is a binding site for substrate. The 237-residue stretch at 111–347 (MIVSTRVRVG…NEIIREETNS (237 aa)) folds into the Phosphagen kinase C-terminal domain. ATP is bound by residues 114–118 (STRVR) and histidine 177. Glutamate 217 provides a ligand contact to substrate. Arginine 221 contacts ATP. Cysteine 263 contributes to the substrate binding site. Residues 272 to 276 (RASVH) and 300 to 305 (RGIHGE) contribute to the ATP site. A substrate-binding site is contributed by glutamate 305.

It belongs to the ATP:guanido phosphotransferase family. Muscle (at protein level).

It catalyses the reaction L-arginine + ATP = N(omega)-phospho-L-arginine + ADP + H(+). Catalyzes the reversible transfer of high energy ATP gamma-phosphate group to L-arginine. The polypeptide is Arginine kinase Oct f 2 (Amphioctopus fangsiao (Ocellated octopus)).